The primary structure comprises 671 residues: Acetyl-coenzyme A synthetase (671 aa).

The interval 1 to 21 (MPTASASESSSNQPESSNASG) is disordered. CoA contacts are provided by residues 221 to 224 (RRGK), Thr339, and Asn363. ATP-binding positions include 415–417 (GEG), 439–444 (DTWWQT), Asp528, and Arg543. Ser551 provides a ligand contact to CoA. Arg554 contributes to the ATP binding site. Residues Val565, His567, and Val570 each coordinate Mg(2+). Arg611 contributes to the CoA binding site. Lys636 carries the N6-acetyllysine modification.

The protein belongs to the ATP-dependent AMP-binding enzyme family. The cofactor is Mg(2+). Post-translationally, acetylated. Deacetylation by the SIR2-homolog deacetylase activates the enzyme.

The enzyme catalyses acetate + ATP + CoA = acetyl-CoA + AMP + diphosphate. Functionally, catalyzes the conversion of acetate into acetyl-CoA (AcCoA), an essential intermediate at the junction of anabolic and catabolic pathways. AcsA undergoes a two-step reaction. In the first half reaction, AcsA combines acetate with ATP to form acetyl-adenylate (AcAMP) intermediate. In the second half reaction, it can then transfer the acetyl group from AcAMP to the sulfhydryl group of CoA, forming the product AcCoA. This chain is Acetyl-coenzyme A synthetase, found in Rhodopirellula baltica (strain DSM 10527 / NCIMB 13988 / SH1).